We begin with the raw amino-acid sequence, 241 residues long: Zinc finger CCHC domain-containing protein 24 (241 aa).

Phosphoserine is present on residues serine 65 and serine 93. The CCHC-type zinc finger occupies 132-149 (YLCHLCFNKGHYIKDCPQ).

The protein is Zinc finger CCHC domain-containing protein 24 of Mus musculus (Mouse).